The chain runs to 434 residues: Protein maelstrom homolog (434 aa).

The segment at residues 4–73 (RRGSRNAYYF…AQGKDAGPWE (70 aa)) is a DNA-binding region (HMG box). Positions 357 to 387 (SHFSSSNQEQRSNTPTGDYPSGVKISGQSSS) are disordered. Residues 363–372 (NQEQRSNTPT) are compositionally biased toward polar residues.

It belongs to the maelstrom family. In terms of assembly, interacts with SMARCB1, SIN3B and DDX4. Interacts with piRNA-associated proteins TDRD1, PIWIL1 and PIWIL2. Interacts with TEX19.

Its subcellular location is the cytoplasm. The protein resides in the nucleus. Functionally, plays a central role during spermatogenesis by repressing transposable elements and preventing their mobilization, which is essential for the germline integrity. Acts via the piRNA metabolic process, which mediates the repression of transposable elements during meiosis by forming complexes composed of piRNAs and Piwi proteins and governs the methylation and subsequent repression of transposons. Its association with piP-bodies suggests a participation in the secondary piRNAs metabolic process. Required for the localization of germ-cell factors to the meiotic nuage. This Sus scrofa (Pig) protein is Protein maelstrom homolog (MAEL).